The primary structure comprises 728 residues: Probable subtilase-type serine protease DR_A0283 (728 aa).

The signal sequence occupies residues 1–22 (MPGALPMKKISLAVLSLTTLLA). Residues 23-148 (ACGQPQTSPQ…RTAQDQLGAQ (126 aa)) constitute a propeptide that is removed on maturation. A Peptidase S8 domain is found at 159 to 471 (QYALDSNHLH…YGLIRMDKLA (313 aa)). Catalysis depends on charge relay system residues aspartate 188, histidine 242, and serine 412.

The protein belongs to the peptidase S8 family.

It localises to the secreted. This chain is Probable subtilase-type serine protease DR_A0283, found in Deinococcus radiodurans (strain ATCC 13939 / DSM 20539 / JCM 16871 / CCUG 27074 / LMG 4051 / NBRC 15346 / NCIMB 9279 / VKM B-1422 / R1).